Consider the following 380-residue polypeptide: High affinity transport system protein p37 (380 aa).

Residues 1–26 (MLKRKKLLQGFLKFLPLIIPATIFVS) form the signal peptide. A lipid anchor (N-palmitoyl cysteine) is attached at C27. A lipid anchor (S-diacylglycerol cysteine) is attached at C27. The disordered stretch occupies residues 285–304 (NHFYTPTENNGKGDSEKSNN).

The protein localises to the cell membrane. In terms of biological role, P37 is part of a high-affinity transport system. This chain is High affinity transport system protein p37 (p37), found in Mycoplasma pneumoniae (strain ATCC 29342 / M129 / Subtype 1) (Mycoplasmoides pneumoniae).